A 63-amino-acid chain; its full sequence is Hyphancin-3G (63 aa).

The N-terminal stretch at 1–22 is a signal peptide; it reads MNFSRILFFMFACFVALASVSA. A propeptide spans 23 to 26 (removed by a dipeptidylpeptidase); it reads VPEP. Leucine 61 is subject to Leucine amide.

This sequence belongs to the cecropin family.

Its subcellular location is the secreted. In terms of biological role, has antibacterial activity. This chain is Hyphancin-3G, found in Hyphantria cunea (Fall webworm moth).